The following is a 330-amino-acid chain: Beta-ketoacyl-[acyl-carrier-protein] synthase III (330 aa).

Active-site residues include cysteine 115 and histidine 255. The segment at 256 to 260 (QANVR) is ACP-binding. The active site involves asparagine 285.

It belongs to the thiolase-like superfamily. FabH family. In terms of assembly, homodimer.

Its subcellular location is the cytoplasm. It catalyses the reaction malonyl-[ACP] + acetyl-CoA + H(+) = 3-oxobutanoyl-[ACP] + CO2 + CoA. It participates in lipid metabolism; fatty acid biosynthesis. Functionally, catalyzes the condensation reaction of fatty acid synthesis by the addition to an acyl acceptor of two carbons from malonyl-ACP. Catalyzes the first condensation reaction which initiates fatty acid synthesis and may therefore play a role in governing the total rate of fatty acid production. Possesses both acetoacetyl-ACP synthase and acetyl transacylase activities. Its substrate specificity determines the biosynthesis of branched-chain and/or straight-chain of fatty acids. In Symbiobacterium thermophilum (strain DSM 24528 / JCM 14929 / IAM 14863 / T), this protein is Beta-ketoacyl-[acyl-carrier-protein] synthase III.